A 123-amino-acid chain; its full sequence is Probable ketoamine kinase in tonB 3'region (123 aa).

D26 acts as the Proton acceptor in catalysis.

The protein belongs to the fructosamine kinase family.

Ketoamine kinase that phosphorylates ketoamines on the third carbon of the sugar moiety to generate ketoamine 3-phosphate. This chain is Probable ketoamine kinase in tonB 3'region, found in Klebsiella pneumoniae.